A 382-amino-acid polypeptide reads, in one-letter code: Mannitol-1-phosphate 5-dehydrogenase (382 aa).

Position 3 to 14 (3 to 14) interacts with NAD(+); the sequence is ALHFGAGNIGRG. Lys269 carries the N6-acetyllysine modification.

This sequence belongs to the mannitol dehydrogenase family.

The catalysed reaction is D-mannitol 1-phosphate + NAD(+) = beta-D-fructose 6-phosphate + NADH + H(+). In Shigella sonnei (strain Ss046), this protein is Mannitol-1-phosphate 5-dehydrogenase.